A 787-amino-acid polypeptide reads, in one-letter code: MLSDTIDTKQQQQQLHVLFIDSYDSFTYNVVRLIEQQTDISPGVNAVHVTTVHSDTFQSMDQLLPLLPLFDAIVVGPGPGNPNNGAQDMGIISELFENANGKLDEVPILGICLGFQAMCLAQGADVSELNTIKHGQVYEMHLNDAARACGLFSGYPDTFKSTRYHSLHVNAEGIDTLLPLCTTEDENGILLMSAQTKNKPWFGVQYHPESCCSELGGLLVSNFLKLSFINNVKTGRWEKKKLNGEFSDILSRLDRTIDRDPIYKVKEKYPKGEDTTYVKQFEVSEDPKLTFEICNIIREEKFVMSSSVISENTGEWSIIALPNSASQVFTHYGAMKKTTVHYWQDSEISYTLLKKCLDGQDSDLPGSLEVIHEDKSQFWITLGKFMENKIIDNHREIPFIGGLVGILGYEIGQYIACGRCNDDENSLVPDAKLVFINNSIVINHKQGKLYCISLDNTFPVALEQSLRDSFVRKKNIKQSLSWPKYLPEEIDFIITMPDKLDYAKAFKKCQDYMHKGDSYEMCLTTQTKVVPSAVIEPWRIFQTLVQRNPAPFSSFFEFKDIIPRQDETPPVLCFLSTSPERFLKWDADTCELRPIKGTVKKGPQMNLAKATRILKTPKEFGENLMILDLIRNDLYELVPDVRVEEFMSVQEYATVYQLVSVVKAHGLTSASKKTRYSGIDVLKHSLPPGSMTGAPKKITVQLLQDKIESKLNKHVNGGARGVYSGVTGYWSVNSNGDWSVNIRCMYSYNGGTSWQLGAGGAITVLSTLDGELEEMYNKLESNLQIFM.

Positions histidine 16–lysine 233 constitute a Glutamine amidotransferase type-1 domain. Residues cysteine 112, histidine 207, and glutamate 209 contribute to the active site. Residues methionine 304–methionine 787 form a PABB component region.

The protein in the C-terminal section; belongs to the anthranilate synthase component I family.

The protein resides in the cytoplasm. The catalysed reaction is chorismate + L-glutamine = 4-amino-4-deoxychorismate + L-glutamate. The protein operates within cofactor biosynthesis; tetrahydrofolate biosynthesis; 4-aminobenzoate from chorismate: step 1/2. Catalyzes the biosynthesis of 4-amino-4-deoxychorismate (ADC) from chorismate and glutamine. Required for the synthesis of 4-aminobenzoate (PABA), an important component in tetrahydrofolate biosynthesis. This is Aminodeoxychorismate synthase (ABZ1) from Saccharomyces cerevisiae (strain ATCC 204508 / S288c) (Baker's yeast).